Reading from the N-terminus, the 161-residue chain is Nucleotide-binding protein Shew185_3601 (161 aa).

The protein belongs to the YajQ family.

Functionally, nucleotide-binding protein. The chain is Nucleotide-binding protein Shew185_3601 from Shewanella baltica (strain OS185).